The chain runs to 859 residues: DNA-directed RNA polymerase subunit Rpo1C (859 aa).

The protein belongs to the RNA polymerase beta' chain family. In terms of assembly, part of the RNA polymerase complex. Post-translationally, this protein undergoes a protein self splicing that involves a post-translational excision of the intervening region (intein) followed by peptide ligation.

The protein resides in the cytoplasm. It carries out the reaction RNA(n) + a ribonucleoside 5'-triphosphate = RNA(n+1) + diphosphate. Its function is as follows. DNA-dependent RNA polymerase (RNAP) catalyzes the transcription of DNA into RNA using the four ribonucleoside triphosphates as substrates. Forms part of the jaw domain. This Methanocaldococcus jannaschii (strain ATCC 43067 / DSM 2661 / JAL-1 / JCM 10045 / NBRC 100440) (Methanococcus jannaschii) protein is DNA-directed RNA polymerase subunit Rpo1C.